Consider the following 497-residue polypeptide: POU domain, class 3, transcription factor 3 (497 aa).

Positions 31 to 51 (GGGGGGGGGGGGAGGGGGGMQ) are enriched in gly residues. 4 disordered regions span residues 31–62 (GGGG…SGAY), 121–189 (WSGS…WGAA), 230–316 (NGML…TPTS), and 458–497 (EKRM…TSVQ). 2 stretches are compositionally biased toward pro residues: residues 133 to 145 (QQPP…PPQG) and 170 to 180 (HLGPPPPPPHQ). Positions 240-250 (GGGGGGAGGGA) are enriched in gly residues. Positions 269–286 (HHHHHHHHAHPHPPHPHH) are enriched in basic residues. Positions 311–385 (EDTPTSDDLE…LLNKWLEEAD (75 aa)) constitute a POU-specific domain. The homeobox DNA-binding region spans 403–462 (KRKKRTSIEVSVKGALESHFLKCPKPSAQEITNLADSLQLEKEVVRVWFCNRRQKEKRMT). The span at 465–483 (GIQQQTPDDVYSQVGTVSA) shows a compositional bias: polar residues.

It belongs to the POU transcription factor family. Class-3 subfamily. In terms of assembly, homodimer. As to expression, brain.

Its subcellular location is the nucleus. Transcription factor that acts synergistically with SOX11 and SOX4. Plays a role in neuronal development. Is implicated in an enhancer activity at the embryonic met-mesencephalic junction; the enhancer element contains the octamer motif (5'-ATTTGCAT-3'). This is POU domain, class 3, transcription factor 3 (Pou3f3) from Rattus norvegicus (Rat).